A 102-amino-acid chain; its full sequence is Small ribosomal subunit protein uS10 (102 aa).

Belongs to the universal ribosomal protein uS10 family. In terms of assembly, part of the 30S ribosomal subunit.

Its function is as follows. Involved in the binding of tRNA to the ribosomes. This is Small ribosomal subunit protein uS10 from Beijerinckia indica subsp. indica (strain ATCC 9039 / DSM 1715 / NCIMB 8712).